The sequence spans 135 residues: Large ribosomal subunit protein uL16 (135 aa).

It belongs to the universal ribosomal protein uL16 family. Part of the 50S ribosomal subunit.

Functionally, binds 23S rRNA and is also seen to make contacts with the A and possibly P site tRNAs. This is Large ribosomal subunit protein uL16 from Coprothermobacter proteolyticus (strain ATCC 35245 / DSM 5265 / OCM 4 / BT).